The sequence spans 610 residues: UvrABC system protein C (610 aa).

The GIY-YIG domain maps to 16-94 (SAPGVYRMYD…IKQYMPKYNV (79 aa)). The 36-residue stretch at 203–238 (KQVISQLVAKMETAAIDMEYERAAQYRDQITALRRV) folds into the UVR domain.

The protein belongs to the UvrC family. Interacts with UvrB in an incision complex.

It localises to the cytoplasm. Functionally, the UvrABC repair system catalyzes the recognition and processing of DNA lesions. UvrC both incises the 5' and 3' sides of the lesion. The N-terminal half is responsible for the 3' incision and the C-terminal half is responsible for the 5' incision. The polypeptide is UvrABC system protein C (Shewanella frigidimarina (strain NCIMB 400)).